Consider the following 236-residue polypeptide: Purine nucleoside phosphorylase CA_C1699 (236 aa).

Zn(2+) contacts are provided by histidine 62, cysteine 97, and histidine 114.

This sequence belongs to the purine nucleoside phosphorylase YfiH/LACC1 family. Homodimer. Requires Cu(2+) as cofactor. The cofactor is Zn(2+).

The catalysed reaction is adenosine + phosphate = alpha-D-ribose 1-phosphate + adenine. The enzyme catalyses S-methyl-5'-thioadenosine + phosphate = 5-(methylsulfanyl)-alpha-D-ribose 1-phosphate + adenine. It carries out the reaction inosine + phosphate = alpha-D-ribose 1-phosphate + hypoxanthine. It catalyses the reaction adenosine + H2O + H(+) = inosine + NH4(+). Purine nucleoside enzyme that catalyzes the phosphorolysis of adenosine and inosine nucleosides, yielding D-ribose 1-phosphate and the respective free bases, adenine and hypoxanthine. Also catalyzes the phosphorolysis of S-methyl-5'-thioadenosine into adenine and S-methyl-5-thio-alpha-D-ribose 1-phosphate. Also has adenosine deaminase activity. This Clostridium acetobutylicum (strain ATCC 824 / DSM 792 / JCM 1419 / IAM 19013 / LMG 5710 / NBRC 13948 / NRRL B-527 / VKM B-1787 / 2291 / W) protein is Purine nucleoside phosphorylase CA_C1699.